We begin with the raw amino-acid sequence, 156 residues long: Small ribosomal subunit protein uS7c (156 aa).

It belongs to the universal ribosomal protein uS7 family. As to quaternary structure, part of the 30S ribosomal subunit.

Its subcellular location is the plastid. The protein localises to the chloroplast. Its function is as follows. One of the primary rRNA binding proteins, it binds directly to 16S rRNA where it nucleates assembly of the head domain of the 30S subunit. This Chlorella vulgaris (Green alga) protein is Small ribosomal subunit protein uS7c (rps7).